Here is a 1138-residue protein sequence, read N- to C-terminus: Phosphatidylserine decarboxylase proenzyme 2 (1138 aa).

Positions 1–122 (MRIIKGRKRG…SNSGLSSHSH (122 aa)) constitute a C2 1 domain. Disordered stretches follow at residues 90 to 166 (TGAP…PGST), 269 to 305 (MRSSSSLPPPLEDMLSNSSAVSGNEIRREKPYSDTDL), and 413 to 448 (AVSENDITSVDDEESENQQESDEEFDIYNEDEREDS). Residues 98-121 (SRPRTTTANTSSSTLSNSGLSSHS) show a composition bias toward low complexity. The span at 125 to 135 (RNLNVTSKGNQ) shows a compositional bias: polar residues. The segment covering 136–166 (TSTSINSVSSSATPAPSHSSSSLSTTGPGST) has biased composition (low complexity). Over residues 293-305 (EIRREKPYSDTDL) the composition is skewed to basic and acidic residues. Positions 421–448 (SVDDEESENQQESDEEFDIYNEDEREDS) are enriched in acidic residues. A C2 2 domain is found at 478 to 600 (RRAKSNFFIS…QQQQHENEWI (123 aa)). Residues D571, S574, and D577 each contribute to the Ca(2+) site. Residues D899, H956, and S1043 each act as charge relay system; for autoendoproteolytic cleavage activity in the active site. S1043 functions as the Schiff-base intermediate with substrate; via pyruvic acid; for decarboxylase activity in the catalytic mechanism. S1043 is modified (pyruvic acid (Ser); by autocatalysis).

It belongs to the phosphatidylserine decarboxylase family. PSD-B subfamily. Eukaryotic type II sub-subfamily. In terms of assembly, heterodimer of a large membrane-associated beta subunit and a small pyruvoyl-containing alpha subunit. Interacts with pstB2/PDR17. This interaction may be a means to structurally tether the donor membrane (ER) harboring PstB2/PDR17 to acceptor membranes (Golgi/endosomes) harboring PSD2 during PtdSer transport to the site of PtdEtn synthesis. It depends on pyruvate as a cofactor. Ca(2+) serves as cofactor. Post-translationally, is synthesized initially as an inactive proenzyme. Formation of the active enzyme involves a self-maturation process in which the active site pyruvoyl group is generated from an internal serine residue via an autocatalytic post-translational modification. Two non-identical subunits are generated from the proenzyme in this reaction, and the pyruvate is formed at the N-terminus of the alpha chain, which is derived from the carboxyl end of the proenzyme. The autoendoproteolytic cleavage occurs by a canonical serine protease mechanism, in which the side chain hydroxyl group of the serine supplies its oxygen atom to form the C-terminus of the beta chain, while the remainder of the serine residue undergoes an oxidative deamination to produce ammonia and the pyruvoyl prosthetic group on the alpha chain. During this reaction, the Ser that is part of the protease active site of the proenzyme becomes the pyruvoyl prosthetic group, which constitutes an essential element of the active site of the mature decarboxylase.

The protein localises to the golgi apparatus membrane. Its subcellular location is the endosome membrane. It carries out the reaction a 1,2-diacyl-sn-glycero-3-phospho-L-serine + H(+) = a 1,2-diacyl-sn-glycero-3-phosphoethanolamine + CO2. Its pathway is phospholipid metabolism; phosphatidylethanolamine biosynthesis; phosphatidylethanolamine from CDP-diacylglycerol: step 2/2. Functionally, catalyzes the formation of phosphatidylethanolamine (PtdEtn) from phosphatidylserine (PtdSer). Plays a central role in phospholipid metabolism and in the interorganelle trafficking of phosphatidylserine. Phosphatidylethanolamine produced by PSD2 is insufficient to completely provide the PtdEtn pool required by mitochondria under respiratory conditions. PSD2 is also involved in the PtdSer transport step to the site of PtdEtn synthesis on the Golgi/endosome membranes. Required for normal heavy metal resistance. This is Phosphatidylserine decarboxylase proenzyme 2 from Saccharomyces cerevisiae (strain ATCC 204508 / S288c) (Baker's yeast).